The primary structure comprises 422 residues: UPF0229 protein Spro_2732 (422 aa).

The segment covering 77–90 has biased composition (basic and acidic residues); it reads PGNDHFVQNDRVER. The segment at 77 to 109 is disordered; it reads PGNDHFVQNDRVERPQGGGGGGSGQGNASQDGE. The span at 92–101 shows a compositional bias: gly residues; it reads QGGGGGGSGQ.

This sequence belongs to the UPF0229 family.

This is UPF0229 protein Spro_2732 from Serratia proteamaculans (strain 568).